A 499-amino-acid polypeptide reads, in one-letter code: Probable UTP--glucose-1-phosphate uridylyltransferase (499 aa).

UTP contacts are provided by residues leucine 108–glycine 111, lysine 122, glutamine 185, and glycine 214. A substrate-binding site is contributed by glycine 110–glycine 111. Residues histidine 215 and asparagine 243 to aspartate 245 contribute to the substrate site. Residues aspartate 245 and lysine 387 each coordinate UTP.

This sequence belongs to the UDPGP type 1 family.

The protein resides in the cytoplasm. Its subcellular location is the nucleus. The enzyme catalyses alpha-D-glucose 1-phosphate + UTP + H(+) = UDP-alpha-D-glucose + diphosphate. Plays a central role as a glucosyl donor in cellular metabolic pathways. This chain is Probable UTP--glucose-1-phosphate uridylyltransferase, found in Schizosaccharomyces pombe (strain 972 / ATCC 24843) (Fission yeast).